We begin with the raw amino-acid sequence, 217 residues long: PMTLGYWNIRGLTHPIRLILEYTNSGYEEKRYNMGDAPDYDRSQWLNEKFKLGLDFPNLPYLIDGTHKLTQSNAILRYIARKHNLCGVTEEETIRMDILENQVMDIRMQLIMLCYSPDFEQKKAEFLEGIPDKMKLFSQFLGKLPWFAGNKLTYVDFLAYDVLDQYRMLEPKCLEAFPNLKDFISRFEGLEKISSYMKSSRFLPKPLFSKFAFWNNK.

Positions 1–87 (PMTLGYWNIR…YIARKHNLCG (87 aa)) constitute a GST N-terminal domain. Residues 6–7 (YW), 45–49 (WLNEK), 58–59 (NL), and 71–72 (QS) contribute to the glutathione site. The GST C-terminal domain maps to 89-207 (TEEETIRMDI…KSSRFLPKPL (119 aa)). Tyr115 contributes to the substrate binding site.

This sequence belongs to the GST superfamily. Mu family. In terms of assembly, homodimer.

The protein resides in the cytoplasm. It catalyses the reaction RX + glutathione = an S-substituted glutathione + a halide anion + H(+). The enzyme catalyses prostaglandin A2 + glutathione = prostaglandin A2-S-(R)-glutathione. It carries out the reaction prostaglandin J2 + glutathione = prostaglandin J2-S-(R)-glutathione. The catalysed reaction is prostaglandin J2 + glutathione = prostaglandin J2-S-(S)-glutathione. It catalyses the reaction prostaglandin A2 + glutathione = prostaglandin A2-S-(S)-glutathione. The enzyme catalyses 11(S)-hydroxy-14(S),15(S)-epoxy-(5Z,8Z,12E)-eicosatrienoate + glutathione = (11S,15S)-dihydroxy-14(R)-S-glutathionyl-(5Z,8Z,12E)-eicosatrienoate. Functionally, conjugation of reduced glutathione to a wide number of exogenous and endogenous hydrophobic electrophiles. Involved in the formation of glutathione conjugates of both prostaglandin A2 (PGA2) and prostaglandin J2 (PGJ2). Participates in the formation of novel hepoxilin regioisomers. This chain is Glutathione S-transferase B (GSTM1), found in Cavia porcellus (Guinea pig).